The following is a 152-amino-acid chain: Endoribonuclease YbeY (152 aa).

His-114, His-118, and His-124 together coordinate Zn(2+).

Belongs to the endoribonuclease YbeY family. The cofactor is Zn(2+).

The protein localises to the cytoplasm. Single strand-specific metallo-endoribonuclease involved in late-stage 70S ribosome quality control and in maturation of the 3' terminus of the 16S rRNA. This Wigglesworthia glossinidia brevipalpis protein is Endoribonuclease YbeY.